Reading from the N-terminus, the 158-residue chain is Low molecular weight phosphotyrosine protein phosphatase (158 aa).

The residue at position 2 (A2) is an N-acetylalanine. C13 acts as the Nucleophile in catalysis. R19 is a catalytic residue. The active-site Proton donor is the D130. Phosphotyrosine occurs at positions 132 and 133.

Belongs to the low molecular weight phosphotyrosine protein phosphatase family. In terms of assembly, interacts with EPHA2; dephosphorylates EPHA2. Interacts with EPHB1. Interacts with the SH3 domain of SPTAN1. Phosphorylated by LCK. Phosphorylation at Tyr-132 increases its phosphatase activity.

The protein localises to the cytoplasm. It catalyses the reaction O-phospho-L-tyrosyl-[protein] + H2O = L-tyrosyl-[protein] + phosphate. The enzyme catalyses a phosphate monoester + H2O = an alcohol + phosphate. Its activity is regulated as follows. Inhibited by sulfhydryl reagents. Its function is as follows. Acts on tyrosine phosphorylated proteins, low-MW aryl phosphates and natural and synthetic acyl phosphates with differences in substrate specificity between isoform 1 and isoform 2. This chain is Low molecular weight phosphotyrosine protein phosphatase (ACP1), found in Pongo abelii (Sumatran orangutan).